Reading from the N-terminus, the 449-residue chain is Cryptochrome DASH (449 aa).

The 133-residue stretch at 15-147 (RLGLFVFRND…PFHETPNNTL (133 aa)) folds into the Photolyase/cryptochrome alpha/beta domain.

This sequence belongs to the DNA photolyase class-1 family. Requires FAD as cofactor. (6R)-5,10-methylene-5,6,7,8-tetrahydrofolate serves as cofactor.

In terms of biological role, may have a photoreceptor function. Binds DNA; probably functions as a transcriptional repressor. In Idiomarina loihiensis (strain ATCC BAA-735 / DSM 15497 / L2-TR), this protein is Cryptochrome DASH (cry).